Reading from the N-terminus, the 366-residue chain is Mannonate dehydratase (366 aa).

Belongs to the mannonate dehydratase family. Requires Fe(2+) as cofactor. Mn(2+) is required as a cofactor.

The enzyme catalyses D-mannonate = 2-dehydro-3-deoxy-D-gluconate + H2O. It functions in the pathway carbohydrate metabolism; pentose and glucuronate interconversion. Catalyzes the dehydration of D-mannonate. This is Mannonate dehydratase from Streptococcus suis (strain 98HAH33).